A 471-amino-acid chain; its full sequence is Glutamate--tRNA ligase (471 aa).

The short motif at 10 to 20 (PSPTGYLHIGG) is the 'HIGH' region element. Residues C107, C109, C134, and E136 each contribute to the Zn(2+) site. A 'KMSKS' region motif is present at residues 244-248 (RLSKR). K247 is a binding site for ATP.

This sequence belongs to the class-I aminoacyl-tRNA synthetase family. Glutamate--tRNA ligase type 1 subfamily. As to quaternary structure, monomer. Requires Zn(2+) as cofactor.

It localises to the cytoplasm. It carries out the reaction tRNA(Glu) + L-glutamate + ATP = L-glutamyl-tRNA(Glu) + AMP + diphosphate. In terms of biological role, catalyzes the attachment of glutamate to tRNA(Glu) in a two-step reaction: glutamate is first activated by ATP to form Glu-AMP and then transferred to the acceptor end of tRNA(Glu). The polypeptide is Glutamate--tRNA ligase (Anaeromyxobacter sp. (strain Fw109-5)).